A 489-amino-acid chain; its full sequence is Ketol-acid reductoisomerase (NADP(+)) (489 aa).

The KARI N-terminal Rossmann domain maps to 17 to 208 (LGVCEFMEQS…GGHKAGVLRS (192 aa)). NADP(+) is bound by residues 45 to 48 (CGAQ), Arg68, Arg76, Ser78, and 108 to 110 (DKQ). The active site involves His132. NADP(+) is bound at residue Gly158. KARI C-terminal knotted domains are found at residues 209–344 (SFVA…KTAP) and 345–485 (QEAP…MTAM). Mg(2+) contacts are provided by Asp217, Glu221, Glu389, and Glu393. Ser414 provides a ligand contact to substrate.

This sequence belongs to the ketol-acid reductoisomerase family. The cofactor is Mg(2+).

The catalysed reaction is (2R)-2,3-dihydroxy-3-methylbutanoate + NADP(+) = (2S)-2-acetolactate + NADPH + H(+). The enzyme catalyses (2R,3R)-2,3-dihydroxy-3-methylpentanoate + NADP(+) = (S)-2-ethyl-2-hydroxy-3-oxobutanoate + NADPH + H(+). It participates in amino-acid biosynthesis; L-isoleucine biosynthesis; L-isoleucine from 2-oxobutanoate: step 2/4. Its pathway is amino-acid biosynthesis; L-valine biosynthesis; L-valine from pyruvate: step 2/4. Involved in the biosynthesis of branched-chain amino acids (BCAA). Catalyzes an alkyl-migration followed by a ketol-acid reduction of (S)-2-acetolactate (S2AL) to yield (R)-2,3-dihydroxy-isovalerate. In the isomerase reaction, S2AL is rearranged via a Mg-dependent methyl migration to produce 3-hydroxy-3-methyl-2-ketobutyrate (HMKB). In the reductase reaction, this 2-ketoacid undergoes a metal-dependent reduction by NADPH to yield (R)-2,3-dihydroxy-isovalerate. The polypeptide is Ketol-acid reductoisomerase (NADP(+)) (Flavobacterium johnsoniae (strain ATCC 17061 / DSM 2064 / JCM 8514 / BCRC 14874 / CCUG 350202 / NBRC 14942 / NCIMB 11054 / UW101) (Cytophaga johnsonae)).